Consider the following 202-residue polypeptide: Small ribosomal subunit protein uS4 (202 aa).

An S4 RNA-binding domain is found at 91 to 168 (SRLSSILYNS…HKVPDYLEVD (78 aa)).

Belongs to the universal ribosomal protein uS4 family. As to quaternary structure, part of the 30S ribosomal subunit. Contacts protein S5. The interaction surface between S4 and S5 is involved in control of translational fidelity.

Its function is as follows. One of the primary rRNA binding proteins, it binds directly to 16S rRNA where it nucleates assembly of the body of the 30S subunit. With S5 and S12 plays an important role in translational accuracy. The protein is Small ribosomal subunit protein uS4 of Ehrlichia canis (strain Jake).